The primary structure comprises 70 residues: Adenylate kinase (70 aa).

Residue glycine 10–threonine 15 coordinates ATP. The tract at residues serine 30–valine 59 is NMP. Residues threonine 31, arginine 36, and glutamate 57–valine 59 each bind AMP.

Belongs to the adenylate kinase family. In terms of assembly, monomer.

It localises to the cytoplasm. It catalyses the reaction AMP + ATP = 2 ADP. The protein operates within purine metabolism; AMP biosynthesis via salvage pathway; AMP from ADP: step 1/1. Functionally, catalyzes the reversible transfer of the terminal phosphate group between ATP and AMP. Plays an important role in cellular energy homeostasis and in adenine nucleotide metabolism. This Streptomyces scabiei protein is Adenylate kinase (adk).